Reading from the N-terminus, the 468-residue chain is Zinc finger protein 672 (468 aa).

C2H2-type zinc fingers lie at residues 15–37 (YSCSVCGKSFQYSAVLLRHERAH), 43–65 (FRCLECGERCARASDLRVHRWTH), 71–93 (YICSECGQSFSHSSLLDLHLGTH), and 100–123 (CPCRLCGRRFPHVSALLLHRVRQH). The C2H2-type 5; degenerate zinc-finger motif lies at 129-151 (HRCPLCARSFRQSALPFHLARAH). 9 C2H2-type zinc fingers span residues 167 to 189 (YHCTQCPRAFHSSAGLRNHSRIH), 202 to 224 (HRCGVCGKSFSKSSTLTRHLQRH), 230 to 252 (FKCPECGKGFLESATLVRHQRTH), 258 to 280 (YACNDCGRCFSESSTLLRHQRSH), 286 to 308 (HICATCGKGFGQRYDLVVHQRSH), 314 to 336 (FPCPECGRGFTDRSDLTKHLRTH), 342 to 364 (YHCELCGKRFTCISNLNVHLRNH), 370 to 392 (HKCPECGKSFSVASKLALHRKTH), and 398 to 420 (AECTECGKFFSHGRSLSQHQRSH).

Belongs to the krueppel C2H2-type zinc-finger protein family.

Its subcellular location is the nucleus. May be involved in transcriptional regulation. In Rattus norvegicus (Rat), this protein is Zinc finger protein 672 (Znf672).